Here is a 521-residue protein sequence, read N- to C-terminus: Bifunctional dihydrofolate reductase-thymidylate synthase (521 aa).

Positions 17 to 194 constitute a DHFR domain; it reads NYQVVVAGTR…IRHSFVSFVR (178 aa). Val21 lines the substrate pocket. NADP(+)-binding positions include Ala23 and 29–35; that span reads GIGKDGV. Asp43 is a binding site for substrate. Residues 67–69 and 88–91 each bind NADP(+); these read RKT and LTRS. Ile130 contributes to the substrate binding site. 131 to 138 is a binding site for NADP(+); that stretch reads GGGQVLRE. Thr151 contributes to the substrate binding site. Residues 197–521 form a thymidylate synthase region; sequence KSVAETHESN…HQKIEMKMAV (325 aa). Position 258 (Arg258) interacts with dUMP. Cys403 is an active-site residue. Residues His404, 422 to 426, Asn434, and 464 to 466 each bind dUMP; these read QRSAD and HVY.

In the N-terminal section; belongs to the dihydrofolate reductase family. The protein in the C-terminal section; belongs to the thymidylate synthase family.

The catalysed reaction is (6S)-5,6,7,8-tetrahydrofolate + NADP(+) = 7,8-dihydrofolate + NADPH + H(+). The enzyme catalyses dUMP + (6R)-5,10-methylene-5,6,7,8-tetrahydrofolate = 7,8-dihydrofolate + dTMP. The protein operates within cofactor biosynthesis; tetrahydrofolate biosynthesis; 5,6,7,8-tetrahydrofolate from 7,8-dihydrofolate: step 1/1. Bifunctional enzyme. Involved in de novo dTMP biosynthesis. Key enzyme in folate metabolism. Can play two different roles depending on the source of dihydrofolate: de novo synthesis of tetrahydrofolate or recycling of the dihydrofolate released as one of the end products of the TS catalyzed reaction. Catalyzes an essential reaction for de novo glycine and purine synthesis, DNA precursor synthesis, and for the conversion of dUMP to dTMP. In Zea mays (Maize), this protein is Bifunctional dihydrofolate reductase-thymidylate synthase (DRTS).